Consider the following 421-residue polypeptide: ATP-dependent RNA helicase RhlB (421 aa).

Positions 9–37 (QKFSDFALHPAVIEALEKKGFHNCTPIQA) match the Q motif motif. The 180-residue stretch at 40 to 219 (LPLTLEGRDV…FEQMNNAEYV (180 aa)) folds into the Helicase ATP-binding domain. 53–60 (AQTGTGKT) lines the ATP pocket. The short motif at 165–168 (DEAD) is the DEAD box element. A Helicase C-terminal domain is found at 245–390 (RLLQTLLEEE…VSKYNPDALM (146 aa)). The disordered stretch occupies residues 396–421 (PLRLTRARPGNGPRRNGPPRNRRRSG). The span at 403-414 (RPGNGPRRNGPP) shows a compositional bias: low complexity.

Belongs to the DEAD box helicase family. RhlB subfamily. Component of the RNA degradosome, which is a multiprotein complex involved in RNA processing and mRNA degradation.

It localises to the cytoplasm. It carries out the reaction ATP + H2O = ADP + phosphate + H(+). Functionally, DEAD-box RNA helicase involved in RNA degradation. Has RNA-dependent ATPase activity and unwinds double-stranded RNA. The protein is ATP-dependent RNA helicase RhlB of Klebsiella pneumoniae subsp. pneumoniae (strain ATCC 700721 / MGH 78578).